The sequence spans 358 residues: GTPase Obg (358 aa).

Residues 1–158 enclose the Obg domain; it reads MFVDNVDIYV…RHVRLELKLI (158 aa). The 197-residue stretch at 159–355 folds into the OBG-type G domain; it reads ADVGLVGFPN…LKYLLHESVR (197 aa). GTP-binding positions include 165–172, 190–194, 212–215, 280–283, and 336–338; these read GFPNVGKS, FTTLI, DIPG, SKVD, and SSA. Residues S172 and T192 each coordinate Mg(2+).

Belongs to the TRAFAC class OBG-HflX-like GTPase superfamily. OBG GTPase family. As to quaternary structure, monomer. It depends on Mg(2+) as a cofactor.

Its subcellular location is the cytoplasm. Its function is as follows. An essential GTPase which binds GTP, GDP and possibly (p)ppGpp with moderate affinity, with high nucleotide exchange rates and a fairly low GTP hydrolysis rate. Plays a role in control of the cell cycle, stress response, ribosome biogenesis and in those bacteria that undergo differentiation, in morphogenesis control. This chain is GTPase Obg, found in Wolinella succinogenes (strain ATCC 29543 / DSM 1740 / CCUG 13145 / JCM 31913 / LMG 7466 / NCTC 11488 / FDC 602W) (Vibrio succinogenes).